The sequence spans 1149 residues: Probable phospholipid-transporting ATPase IA (1149 aa).

The Cytoplasmic portion of the chain corresponds to 1–65; sequence MPTMRRTVSE…TAKYNIITFL (65 aa). A Phosphoserine modification is found at Ser25. Phosphothreonine is present on Thr28. Ser29 is modified (phosphoserine). The chain crosses the membrane as a helical span at residues 66-86; the sequence is PRFLYSQFRRAANSFFLFIAL. Residues 87–92 lie on the Extracellular side of the membrane; sequence LQQIPD. The chain crosses the membrane as a helical span at residues 93-115; that stretch reads VSPTGRYTTLVPLLFILAVAAIK. Over 116–297 the chain is Cytoplasmic; that stretch reads EIIEDIKRHK…SNVERITNVQ (182 aa). The chain crosses the membrane as a helical span at residues 298–319; sequence ILILFCILIAMSLVCSVGSAIW. Residues 320-344 are Extracellular-facing; that stretch reads NRRHSGRDWYLNLNYGGANNFGLNF. The chain crosses the membrane as a helical span at residues 345–366; it reads LTFIILFNNLIPISLLVTLEVV. Residues 367–842 lie on the Cytoplasmic side of the membrane; that stretch reads KFTQAYFINW…GAWNYNRGSK (476 aa). Asp409 serves as the catalytic 4-aspartylphosphate intermediate. Residues Asp409, Lys410, Thr411, Glu493, Phe534, Lys557, Arg590, Thr670, Gly671, Asp672, 726-733, Arg760, and Lys766 contribute to the ATP site; that span reads ALIIDGKT. Asp409 provides a ligand contact to Mg(2+). Thr411 provides a ligand contact to Mg(2+). Asp786 serves as a coordination point for Mg(2+). 2 residues coordinate ATP: Asn789 and Asp790. Mg(2+) is bound at residue Asp790. The helical transmembrane segment at 843 to 863 threads the bilayer; that stretch reads CILYCFYKNIVLYIIEIWFAF. The Extracellular segment spans residues 864 to 875; that stretch reads VNGFSGQILFER. Residues 876-895 form a helical membrane-spanning segment; sequence WCIGLYNVMFTAMPPLTLGI. At 896–925 the chain is on the cytoplasmic side; that stretch reads FERSCRKEYMLKYPELYKTSQNALDFNTKV. Residues 926 to 947 form a helical membrane-spanning segment; sequence FWVHCLNGLFHSVILFWFPLKA. Over 948 to 961 the chain is Extracellular; that stretch reads LQYGTVFENGRTSD. The chain crosses the membrane as a helical span at residues 962–984; that stretch reads YLLLGNFVYTFVVITVCLKAGLE. At 985–990 the chain is on the cytoplasmic side; it reads TSYWTW. A helical transmembrane segment spans residues 991–1011; sequence FSHIAIWGSIALWVVFFGIYS. Over 1012-1029 the chain is Extracellular; the sequence is SLWPAVPMAPDMSGEAAM. Residues 1030 to 1055 traverse the membrane as a helical segment; sequence LFSSGVFWMGLLFIPVASLLLDVVYK. The Cytoplasmic portion of the chain corresponds to 1056–1149; that stretch reads VIKRTAFKTL…DTTKQRPDEW (94 aa). Position 1080–1087 (1080–1087) interacts with ATP; the sequence is GAVVLGKS. A Phosphoserine modification is found at Ser1111.

Belongs to the cation transport ATPase (P-type) (TC 3.A.3) family. Type IV subfamily. As to quaternary structure, component of a P4-ATPase flippase complex which consists of a catalytic alpha subunit and an accessory beta subunit. Interacts with TMEM30A to form a flippase complex; this complex forms an intermediate phosphoenzyme. Interacts with TMEM30B; this interaction is reported conflictingly. The cofactor is Mg(2+). In terms of processing, cleaved by calpain in a caspase- and calcium influx-dependent manner during platelet apoptosis leading to a 100 kDa polypeptide. In terms of tissue distribution, kidney.

The protein resides in the cytoplasmic vesicle. The protein localises to the secretory vesicle. Its subcellular location is the chromaffin granule membrane. It is found in the cytoplasmic granule. It localises to the cell membrane. The protein resides in the endoplasmic reticulum. The protein localises to the golgi apparatus. It catalyses the reaction ATP + H2O + phospholipidSide 1 = ADP + phosphate + phospholipidSide 2.. The enzyme catalyses a 1,2-diacyl-sn-glycero-3-phospho-L-serine(out) + ATP + H2O = a 1,2-diacyl-sn-glycero-3-phospho-L-serine(in) + ADP + phosphate + H(+). Its function is as follows. Catalytic component of a P4-ATPase flippase complex which catalyzes the hydrolysis of ATP coupled to the transport of aminophospholipids from the outer to the inner leaflet of various membranes and ensures the maintenance of asymmetric distribution of phospholipids. Phospholipid translocation also seems to be implicated in vesicle formation and in uptake of lipid signaling molecules. In vitro, its ATPase activity is selectively and stereospecifically stimulated by phosphatidylserine (PS). The flippase complex ATP8A1:TMEM30A seems to play a role in regulation of cell migration probably involving flippase-mediated translocation of phosphatidylethanolamine (PE) at the cell membrane. Acts as aminophospholipid translocase at the cell membrane in neuronal cells. The polypeptide is Probable phospholipid-transporting ATPase IA (Bos taurus (Bovine)).